The primary structure comprises 230 residues: Heptaprenylglyceryl phosphate synthase (230 aa).

Lys12 is a binding site for sn-glycerol 1-phosphate. The Mg(2+) site is built by Asp14 and Thr40. Residues 159–164 (YIEYSG), Gly189, and 209–210 (GD) contribute to the sn-glycerol 1-phosphate site.

Belongs to the GGGP/HepGP synthase family. Group I subfamily. Homodimer. The cofactor is Mg(2+).

The catalysed reaction is sn-glycerol 1-phosphate + all-trans-heptaprenyl diphosphate = 3-heptaprenyl-sn-glycero-1-phosphate + diphosphate. The protein operates within membrane lipid metabolism; glycerophospholipid metabolism. Its function is as follows. Prenyltransferase that catalyzes in vivo the transfer of the heptaprenyl moiety of heptaprenyl pyrophosphate (HepPP; 35 carbon atoms) to the C3 hydroxyl of sn-glycerol-1-phosphate (G1P), producing heptaprenylglyceryl phosphate (HepGP). This reaction is an ether-bond-formation step in the biosynthesis of archaea-type G1P-based membrane lipids found in Bacillales. The sequence is that of Heptaprenylglyceryl phosphate synthase from Staphylococcus aureus (strain bovine RF122 / ET3-1).